Here is a 704-residue protein sequence, read N- to C-terminus: Glycine--tRNA ligase beta subunit (704 aa).

This sequence belongs to the class-II aminoacyl-tRNA synthetase family. As to quaternary structure, tetramer of two alpha and two beta subunits.

The protein localises to the cytoplasm. The enzyme catalyses tRNA(Gly) + glycine + ATP = glycyl-tRNA(Gly) + AMP + diphosphate. The polypeptide is Glycine--tRNA ligase beta subunit (Rhizobium etli (strain CIAT 652)).